We begin with the raw amino-acid sequence, 274 residues long: Chemotaxis protein methyltransferase 1 (274 aa).

Residues 1–274 (MSAANADFEL…CSPGIIYRAK (274 aa)) form the CheR-type methyltransferase domain. S-adenosyl-L-methionine contacts are provided by residues Asn72, Thr74, Arg78, Glu115, Asp144, 200–201 (NL), and 217–218 (RN).

The catalysed reaction is L-glutamyl-[protein] + S-adenosyl-L-methionine = [protein]-L-glutamate 5-O-methyl ester + S-adenosyl-L-homocysteine. Methylation of the membrane-bound methyl-accepting chemotaxis proteins (MCP) to form gamma-glutamyl methyl ester residues in MCP. This Pseudomonas aeruginosa (strain ATCC 15692 / DSM 22644 / CIP 104116 / JCM 14847 / LMG 12228 / 1C / PRS 101 / PAO1) protein is Chemotaxis protein methyltransferase 1 (cheR1).